The following is a 510-amino-acid chain: Fumarate hydratase, mitochondrial (510 aa).

The N-terminal 44 residues, 1-44, are a transit peptide targeting the mitochondrion; the sequence is MYRALRLLARSRPLVRAPAAALASAPGLGGAAVPSFWPPNAARM. N6-acetyllysine; alternate is present on residues Lys61, Lys66, and Lys80. Residues Lys61, Lys66, and Lys80 each carry the N6-succinyllysine; alternate modification. Residues Thr85 and Thr90 each carry the phosphothreonine modification. An N6-acetyllysine modification is found at Lys94. An N6-acetyllysine; alternate mark is found at Lys115 and Lys122. N6-succinyllysine; alternate is present on residues Lys115 and Lys122. Residues 145 to 147, 176 to 179, and 186 to 188 each bind substrate; these read SGT, HPND, and SSN. Lys213 carries the post-translational modification N6-acetyllysine. Lys223 bears the N6-acetyllysine; alternate mark. Position 223 is an N6-succinyllysine; alternate (Lys223). Residue Thr234 participates in substrate binding. His235 functions as the Proton donor/acceptor in the catalytic mechanism. A Phosphothreonine; by PRKDC modification is found at Thr236. An N6-acetyllysine modification is found at Lys256. The residue at position 292 (Lys292) is an N6-acetyllysine; alternate. The residue at position 292 (Lys292) is an N6-succinyllysine; alternate. Residue Ser365 is part of the active site. Substrate is bound by residues Ser366 and 371–373; that span reads KVN. The residue at position 366 (Ser366) is a Phosphoserine. Lys467 and Lys473 each carry N6-succinyllysine. Lys502 bears the N6-acetyllysine mark.

This sequence belongs to the class-II fumarase/aspartase family. Fumarase subfamily. Homotetramer. Interacts with H2AZ1. In terms of processing, phosphorylation at Thr-236 by PRKDC in response to DNA damage promotes translocation to the nucleus and recruitment to DNA double-strand breaks (DSBs). As to expression, expressed in red blood cells; underexpressed in red blood cells (cytoplasm) of patients with hereditary non-spherocytic hemolytic anemia of unknown etiology.

It is found in the mitochondrion. The protein resides in the cytoplasm. The protein localises to the cytosol. It localises to the nucleus. Its subcellular location is the chromosome. The catalysed reaction is (S)-malate = fumarate + H2O. The protein operates within carbohydrate metabolism; tricarboxylic acid cycle; (S)-malate from fumarate: step 1/1. Its function is as follows. Catalyzes the reversible stereospecific interconversion of fumarate to L-malate. Experiments in other species have demonstrated that specific isoforms of this protein act in defined pathways and favor one direction over the other. In terms of biological role, catalyzes the hydration of fumarate to L-malate in the tricarboxylic acid (TCA) cycle to facilitate a transition step in the production of energy in the form of NADH. Catalyzes the dehydration of L-malate to fumarate. Fumarate metabolism in the cytosol plays a role during urea cycle and arginine metabolism; fumarate being a by-product of the urea cycle and amino-acid catabolism. Also plays a role in DNA repair by promoting non-homologous end-joining (NHEJ). In response to DNA damage and phosphorylation by PRKDC, translocates to the nucleus and accumulates at DNA double-strand breaks (DSBs): acts by catalyzing formation of fumarate, an inhibitor of KDM2B histone demethylase activity, resulting in enhanced dimethylation of histone H3 'Lys-36' (H3K36me2). This is Fumarate hydratase, mitochondrial from Homo sapiens (Human).